The chain runs to 175 residues: Adenine phosphoribosyltransferase (175 aa).

It belongs to the purine/pyrimidine phosphoribosyltransferase family. Homodimer.

It localises to the cytoplasm. The enzyme catalyses AMP + diphosphate = 5-phospho-alpha-D-ribose 1-diphosphate + adenine. It functions in the pathway purine metabolism; AMP biosynthesis via salvage pathway; AMP from adenine: step 1/1. Catalyzes a salvage reaction resulting in the formation of AMP, that is energically less costly than de novo synthesis. This Lactobacillus acidophilus (strain ATCC 700396 / NCK56 / N2 / NCFM) protein is Adenine phosphoribosyltransferase.